The following is a 122-amino-acid chain: NADH-quinone oxidoreductase subunit A (122 aa).

3 consecutive transmembrane segments (helical) span residues 10–30, 66–86, and 91–111; these read MIVL…LTLG, IFAL…PWAV, and LGLF…VGLA.

The protein belongs to the complex I subunit 3 family. NDH-1 is composed of 14 different subunits. Subunits NuoA, H, J, K, L, M, N constitute the membrane sector of the complex.

It is found in the cell membrane. It carries out the reaction a quinone + NADH + 5 H(+)(in) = a quinol + NAD(+) + 4 H(+)(out). NDH-1 shuttles electrons from NADH, via FMN and iron-sulfur (Fe-S) centers, to quinones in the respiratory chain. The immediate electron acceptor for the enzyme in this species is believed to be a menaquinone. Couples the redox reaction to proton translocation (for every two electrons transferred, four hydrogen ions are translocated across the cytoplasmic membrane), and thus conserves the redox energy in a proton gradient. The chain is NADH-quinone oxidoreductase subunit A from Bacillus anthracis.